Here is a 346-residue protein sequence, read N- to C-terminus: Histidinol-phosphate aminotransferase (346 aa).

The residue at position 206 (Lys-206) is an N6-(pyridoxal phosphate)lysine.

This sequence belongs to the class-II pyridoxal-phosphate-dependent aminotransferase family. Histidinol-phosphate aminotransferase subfamily. Homodimer. The cofactor is pyridoxal 5'-phosphate.

The catalysed reaction is L-histidinol phosphate + 2-oxoglutarate = 3-(imidazol-4-yl)-2-oxopropyl phosphate + L-glutamate. It participates in amino-acid biosynthesis; L-histidine biosynthesis; L-histidine from 5-phospho-alpha-D-ribose 1-diphosphate: step 7/9. This is Histidinol-phosphate aminotransferase from Bacteroides thetaiotaomicron (strain ATCC 29148 / DSM 2079 / JCM 5827 / CCUG 10774 / NCTC 10582 / VPI-5482 / E50).